Here is a 344-residue protein sequence, read N- to C-terminus: Phenylalanine--tRNA ligase alpha subunit (344 aa).

Residue E269 participates in Mg(2+) binding.

It belongs to the class-II aminoacyl-tRNA synthetase family. Phe-tRNA synthetase alpha subunit type 1 subfamily. In terms of assembly, tetramer of two alpha and two beta subunits. Mg(2+) serves as cofactor.

The protein localises to the cytoplasm. It catalyses the reaction tRNA(Phe) + L-phenylalanine + ATP = L-phenylalanyl-tRNA(Phe) + AMP + diphosphate + H(+). This chain is Phenylalanine--tRNA ligase alpha subunit, found in Ralstonia nicotianae (strain ATCC BAA-1114 / GMI1000) (Ralstonia solanacearum).